We begin with the raw amino-acid sequence, 2778 residues long: Probable ubiquitin carboxyl-terminal hydrolase FAF (2778 aa).

Residues 1 to 85 form a disordered region; sequence MTFDTRRHTT…SQSSDDVAAS (85 aa). Positions 10-39 are enriched in low complexity; it reads TGQPGSTAPSSSSSTTSTTTTTTSPAQSAG. Polar residues predominate over residues 71 to 85; the sequence is QPATDSQSSDDVAAS. Phosphoserine is present on Ser924. A disordered region spans residues 1065 to 1094; the sequence is GTGLASSPDSSSDSSTGSPPRPCPDMQRVE. The span at 1070 to 1082 shows a compositional bias: low complexity; sequence SSPDSSSDSSTGS. Residues 1668–2062 form the USP domain; it reads CGLKNAGATC…NAYMLFYTRC (395 aa). Residue Cys1677 is the Nucleophile of the active site. The Proton acceptor role is filled by His1986. Disordered regions lie at residues 2568-2632 and 2644-2691; these read VSEK…GDSN and AYTS…INGL. Composition is skewed to low complexity over residues 2614-2627 and 2644-2671; these read TPTT…AWPA and AYTS…GSGA. A compositionally biased stretch (polar residues) spans 2672 to 2691; the sequence is NSETESSAQETTGETTINGL.

The protein belongs to the peptidase C19 family. As to quaternary structure, interacts with imd. Post-translationally, ubiquitinated. Ubiquitination is enhanced by the expression of imd. Eye disks and ovaries. Expressed in larval fat body.

The catalysed reaction is Thiol-dependent hydrolysis of ester, thioester, amide, peptide and isopeptide bonds formed by the C-terminal Gly of ubiquitin (a 76-residue protein attached to proteins as an intracellular targeting signal).. Its function is as follows. Ubiquitin C-terminal hydrolase involved in development and the imd/NF-kappa-B (IMD) signaling cascade. Required for eye and embryo development, and plays a role in compound eye assembly and oogenesis respectively. In the larval eye disks, cells outside the assembling facets require this protein for short-range cell interactions that prevent the mystery cells from becoming photoreceptors. Also required for nuclear migration and cellularization in early embryogenesis and could play a role in pole cell determination, development or function. Regulates the IMD signaling cascade at later stages of infection (around 6 hours post-infection) by inhibiting the expression of the antimicrobial peptides Dpt and Dro. Acts by modulating the state of imd polyubiquitination and/or stability; a function which appears to be independent of its enzymatic activity. In turn, imd enhances the polyubiquitination and stability of faf suggesting that they may form a regulatory feedback mechanism within the Imd pathway. This is Probable ubiquitin carboxyl-terminal hydrolase FAF (faf) from Drosophila melanogaster (Fruit fly).